The sequence spans 173 residues: Co-chaperone protein HscB homolog (173 aa).

The region spanning 5 to 77 (CHFALFELQP…AQRARYLLTI (73 aa)) is the J domain.

Belongs to the HscB family. In terms of assembly, interacts with HscA and stimulates its ATPase activity.

Its function is as follows. Co-chaperone involved in the maturation of iron-sulfur cluster-containing proteins. Seems to help targeting proteins to be folded toward HscA. The polypeptide is Co-chaperone protein HscB homolog (Pseudomonas fluorescens (strain Pf0-1)).